Consider the following 93-residue polypeptide: uncharacterized protein (93 aa).

Residues 35–72 (KSVPPPTPPKPVKKTPSPTLPKPSKQKQEPQVEVNEDR) form a disordered region. The segment covering 60 to 72 (QKQEPQVEVNEDR) has biased composition (basic and acidic residues).

This is an uncharacterized protein from Ostreid herpesvirus 1 (isolate France) (OsHV-1).